The sequence spans 484 residues: MGHVLGGTLLAANRLARPPAVVLGKPRVCCWRASPWPVIVSSALQFSSSSARHTNYTSARYEARGRSTTQRKVDDRPWHRESSGSLPKSTSPDPTGGDATKGRLLTTPTRLLKLILPIPFHPEQEYINSDETKTNKPKEDAVEPLALLVHPQQPLSYLERLIQAEIPPLLVKDREKLPEIIFRAEADYTGGNKSNDGRREESNGNGSNVASYSGLGREGPSKGDTHWVRWSGSTEIGDFIRDAARGREFSVTIEGHAEELRVAVPSFKDRTYYMRMRLRRMSQEIDQMATVKRECDLLAHKGAHALAKGGFAALAAWWGIVYYVTFHTDMGWDLVEPITYLAGLASIMGGYLWFLFISRDLSYKAAMNVTVSRRQNALYQERGFDPAKWDQLVHDANGLRREIKFAATEYGVEWDEMKDLGGEEVKEVLEEEKGGKARKREQEDEDGDGDDDHDHDHDHVSHGAELQGQDILHANEAAANVPGD.

A mitochondrion-targeting transit peptide spans 1–33 (MGHVLGGTLLAANRLARPPAVVLGKPRVCCWRA). At 34-304 (SPWPVIVSSA…CDLLAHKGAH (271 aa)) the chain is on the mitochondrial matrix side. 2 disordered regions span residues 59–104 (ARYE…KGRL) and 188–227 (YTGG…DTHW). Basic and acidic residues predominate over residues 61 to 82 (YEARGRSTTQRKVDDRPWHRES). Residues 83 to 93 (SGSLPKSTSPD) are compositionally biased toward polar residues. A helical transmembrane segment spans residues 305–326 (ALAKGGFAALAAWWGIVYYVTF). Residues 327-334 (HTDMGWDL) are Mitochondrial intermembrane-facing. The Selectivity filter motif lies at 332–340 (WDLVEPITY). The helical transmembrane segment at 335–355 (VEPITYLAGLASIMGGYLWFL) threads the bilayer. Glu336 contributes to the Ca(2+) binding site. At 356 to 484 (FISRDLSYKA…NEAAANVPGD (129 aa)) the chain is on the mitochondrial matrix side. Basic and acidic residues-rich tracts occupy residues 426-435 (KEVLEEEKGG) and 452-462 (DHDHDHDHVSH). Residues 426–484 (KEVLEEEKGGKARKREQEDEDGDGDDDHDHDHDHVSHGAELQGQDILHANEAAANVPGD) are disordered.

The protein belongs to the MCU (TC 1.A.77) family. Homotetramer, assembles in a dimer or dimers configuration with two interfaces.

The protein localises to the mitochondrion inner membrane. The enzyme catalyses Ca(2+)(in) = Ca(2+)(out). Its activity is regulated as follows. Inhibited by ruthenium red or its derivative Ru360. Highly selective calcium channel localized to the inner mitochondrial membrane, which mediates calcium uptake into the mitochondrial matrix. Mitochondrial calcium homeostasis plays key roles in cellular physiology and regulates ATP production, cytoplasmic calcium signals and activation of cell death pathways. Sufficient to operate as a pore-forming channel without the need of calcium-sensor or auxiliary subunit. In Metarhizium acridum (strain CQMa 102), this protein is Calcium uniporter protein, mitochondrial.